Reading from the N-terminus, the 246-residue chain is Spherulin-1A (246 aa).

The signal sequence occupies residues 1-19 (MKSTFLFALFVLFLAASEA). A disordered region spans residues 23-45 (YPTNPPTTPPTPAPTSTPLPSSA). Residues 25–39 (TNPPTTPPTPAPTST) are compositionally biased toward pro residues. The 147-residue stretch at 74–220 (FDFKNSKLGV…SLNISSIQTV (147 aa)) folds into the Cupin type-1 domain. Mn(2+)-binding residues include H123, H125, E130, and H170. N213 carries N-linked (GlcNAc...) asparagine glycosylation.

This sequence belongs to the germin family.

The protein localises to the secreted. Its subcellular location is the cell wall. In Physarum polycephalum (Slime mold), this protein is Spherulin-1A.